The chain runs to 306 residues: Ornithine carbamoyltransferase (306 aa).

Carbamoyl phosphate contacts are provided by residues 50 to 53 (STRT), Q77, R101, and 128 to 131 (HPCQ). L-ornithine contacts are provided by residues N160, D224, and 228 to 229 (SM). Residues 261 to 262 (CL) and R289 each bind carbamoyl phosphate.

This sequence belongs to the aspartate/ornithine carbamoyltransferase superfamily. OTCase family.

It localises to the cytoplasm. The catalysed reaction is carbamoyl phosphate + L-ornithine = L-citrulline + phosphate + H(+). It functions in the pathway amino-acid biosynthesis; L-arginine biosynthesis; L-arginine from L-ornithine and carbamoyl phosphate: step 1/3. Its function is as follows. Reversibly catalyzes the transfer of the carbamoyl group from carbamoyl phosphate (CP) to the N(epsilon) atom of ornithine (ORN) to produce L-citrulline. The protein is Ornithine carbamoyltransferase of Aquifex aeolicus (strain VF5).